Consider the following 273-residue polypeptide: 3-methyl-2-oxobutanoate hydroxymethyltransferase (273 aa).

Positions 41 and 80 each coordinate Mg(2+). 3-methyl-2-oxobutanoate-binding positions include 41–42 (DS), D80, and K110. Position 112 (E112) interacts with Mg(2+). The active-site Proton acceptor is E180.

The protein belongs to the PanB family. Homodecamer; pentamer of dimers. Mg(2+) is required as a cofactor.

The protein resides in the cytoplasm. It catalyses the reaction 3-methyl-2-oxobutanoate + (6R)-5,10-methylene-5,6,7,8-tetrahydrofolate + H2O = 2-dehydropantoate + (6S)-5,6,7,8-tetrahydrofolate. The protein operates within cofactor biosynthesis; (R)-pantothenate biosynthesis; (R)-pantoate from 3-methyl-2-oxobutanoate: step 1/2. In terms of biological role, catalyzes the reversible reaction in which hydroxymethyl group from 5,10-methylenetetrahydrofolate is transferred onto alpha-ketoisovalerate to form ketopantoate. The chain is 3-methyl-2-oxobutanoate hydroxymethyltransferase from Deinococcus geothermalis (strain DSM 11300 / CIP 105573 / AG-3a).